The primary structure comprises 67 residues: Conotoxin Lt5.9 (67 aa).

The first 19 residues, Met-1–Pro-19, serve as a signal peptide directing secretion. A propeptide spanning residues Lys-20 to Val-46 is cleaved from the precursor.

It belongs to the conotoxin T superfamily. Contains 2 disulfide bonds that can be either 'C1-C3, C2-C4' or 'C1-C4, C2-C3', since these disulfide connectivities have been observed for conotoxins with cysteine framework V (for examples, see AC P0DQQ7 and AC P81755). As to expression, expressed by the venom duct.

The protein localises to the secreted. This chain is Conotoxin Lt5.9, found in Conus litteratus (Lettered cone).